We begin with the raw amino-acid sequence, 75 residues long: MTVIRLTKMGRKKRPFYRIVVTDSRKRRDGSWIESIGYYNPMVEPEVVKFDAERLAYWKSVGAKLSDRVAAITSK.

Belongs to the bacterial ribosomal protein bS16 family.

In Campylobacter lari (strain RM2100 / D67 / ATCC BAA-1060), this protein is Small ribosomal subunit protein bS16.